A 485-amino-acid polypeptide reads, in one-letter code: Glutamate--tRNA ligase 1 (485 aa).

The short motif at 9–19 is the 'HIGH' region element; the sequence is PSPTGHLHIGG. Residues 250-254 carry the 'KMSKS' region motif; that stretch reads KMSKR. Lysine 253 is an ATP binding site.

Belongs to the class-I aminoacyl-tRNA synthetase family. Glutamate--tRNA ligase type 1 subfamily. Monomer.

The protein resides in the cytoplasm. The enzyme catalyses tRNA(Glu) + L-glutamate + ATP = L-glutamyl-tRNA(Glu) + AMP + diphosphate. Functionally, catalyzes the attachment of glutamate to tRNA(Glu) in a two-step reaction: glutamate is first activated by ATP to form Glu-AMP and then transferred to the acceptor end of tRNA(Glu). The sequence is that of Glutamate--tRNA ligase 1 from Caldicellulosiruptor saccharolyticus (strain ATCC 43494 / DSM 8903 / Tp8T 6331).